A 128-amino-acid chain; its full sequence is Small nuclear ribonucleoprotein associated homolog 13 (128 aa).

The protein belongs to the eukaryotic ribosomal protein eL8 family.

Its subcellular location is the nucleus. The protein localises to the nucleolus. Functionally, binds to the 5'-stem-loop of U4 snRNA and may play a role in the late stage of spliceosome assembly. The protein undergoes a conformational change upon RNA-binding. The protein is Small nuclear ribonucleoprotein associated homolog 13 of Caenorhabditis elegans.